A 454-amino-acid chain; its full sequence is Exodeoxyribonuclease 7 large subunit (454 aa).

Low complexity predominate over residues 337 to 352 (ANQRQQRASQRLRQQN). The segment at 337–359 (ANQRQQRASQRLRQQNPQPRIHR) is disordered.

The protein belongs to the XseA family. In terms of assembly, heterooligomer composed of large and small subunits.

It localises to the cytoplasm. It carries out the reaction Exonucleolytic cleavage in either 5'- to 3'- or 3'- to 5'-direction to yield nucleoside 5'-phosphates.. Bidirectionally degrades single-stranded DNA into large acid-insoluble oligonucleotides, which are then degraded further into small acid-soluble oligonucleotides. In Salmonella arizonae (strain ATCC BAA-731 / CDC346-86 / RSK2980), this protein is Exodeoxyribonuclease 7 large subunit.